The following is a 358-amino-acid chain: DnaJ homolog subfamily B member 11 (358 aa).

The N-terminal stretch at 1–22 (MAPQNLSTFCLLLLYLIGTVIA) is a signal peptide. Residues 25-90 (DFYKILGVPR…EKRKQYDTYG (66 aa)) form the J domain. Position 188 is a phosphothreonine (Thr188). A glycan (N-linked (GlcNAc...) asparagine) is linked at Asn261.

In terms of assembly, part of a large chaperone multiprotein complex comprising DNAJB11, HSP90B1, HSPA5, HYOU, PDIA2, PDIA4, PDIA6, PPIB, SDF2L1, UGGT1 and very small amounts of ERP29, but not, or at very low levels, CALR nor CANX. Binds to denatured substrates in an ATP-independent manner. Interacts via the J domain with HSPA5 in an ATP-dependent manner. Contains high-mannose Endo H-sensitive carbohydrates. Post-translationally, cys-169, Cys-171, Cys-193 and Cys-196 form intramolecular disulfide bonds. The preferential partner for each Cys is not known.

The protein resides in the endoplasmic reticulum lumen. Its function is as follows. As a co-chaperone for HSPA5 it is required for proper folding, trafficking or degradation of proteins. Binds directly to both unfolded proteins that are substrates for ERAD and nascent unfolded peptide chains, but dissociates from the HSPA5-unfolded protein complex before folding is completed. May help recruiting HSPA5 and other chaperones to the substrate. Stimulates HSPA5 ATPase activity. It is necessary for maturation and correct trafficking of PKD1. The chain is DnaJ homolog subfamily B member 11 (Dnajb11) from Mus musculus (Mouse).